The sequence spans 492 residues: GMP reductase (492 aa).

Residues 30-31 and arginine 78 contribute to the NADP(+) site; that span reads SR. CBS domains follow at residues 99-162 and 164-223; these read LIED…LVET and MTPV…RNAT. NADP(+)-binding positions include 260-262 and 313-314; these read DIA and VG. K(+)-binding residues include glycine 314, glycine 316, and cysteine 319. Cysteine 319 (thioimidate intermediate) is an active-site residue. Residue threonine 321 is the Proton donor/acceptor of the active site. Arginine 322 serves as a coordination point for K(+). GMP-binding positions include 352-354, 375-376, and 401-403; these read DGG, GN, and GMA. NADP(+)-binding positions include methionine 402 and 454–457; that span reads SGIS. Residues 490–492 carry the Microbody targeting signal motif; sequence SKL.

The protein belongs to the IMPDH/GMPR family. GuaC type 1 subfamily. As to quaternary structure, homotetramer.

The protein localises to the glycosome. The enzyme catalyses IMP + NH4(+) + NADP(+) = GMP + NADPH + 2 H(+). Its activity is regulated as follows. Activated by GTP and inhibited by XMP and the IMP analogs allopurinol nucleotide and thiopurinol nucleotide. In terms of biological role, catalyzes the irreversible NADPH-dependent deamination of GMP to IMP. It functions in the conversion of nucleobase, nucleoside and nucleotide derivatives of G to A nucleotides, and in maintaining the intracellular balance of A and G nucleotides. This Leishmania donovani protein is GMP reductase.